An 86-amino-acid polypeptide reads, in one-letter code: Large ribosomal subunit protein eL43 (86 aa).

The C4-type zinc finger occupies 38-60 (CPFCGHKGKVYRLSTGVWACKKC).

Belongs to the eukaryotic ribosomal protein eL43 family. Zn(2+) is required as a cofactor.

The chain is Large ribosomal subunit protein eL43 from Desulfurococcus amylolyticus (strain DSM 18924 / JCM 16383 / VKM B-2413 / 1221n) (Desulfurococcus kamchatkensis).